Consider the following 493-residue polypeptide: Guanosine-5'-triphosphate,3'-diphosphate pyrophosphatase (493 aa).

Belongs to the GppA/Ppx family. GppA subfamily.

It carries out the reaction guanosine 3'-diphosphate 5'-triphosphate + H2O = guanosine 3',5'-bis(diphosphate) + phosphate + H(+). It participates in purine metabolism; ppGpp biosynthesis; ppGpp from GTP: step 2/2. In terms of biological role, catalyzes the conversion of pppGpp to ppGpp. Guanosine pentaphosphate (pppGpp) is a cytoplasmic signaling molecule which together with ppGpp controls the 'stringent response', an adaptive process that allows bacteria to respond to amino acid starvation, resulting in the coordinated regulation of numerous cellular activities. The sequence is that of Guanosine-5'-triphosphate,3'-diphosphate pyrophosphatase from Salmonella gallinarum (strain 287/91 / NCTC 13346).